The following is a 155-amino-acid chain: FHA domain-containing protein FhaB (155 aa).

Residues 6–28 (LQLTRVGFLLLLWLFIWSVLRIL) traverse the membrane as a helical segment. A Phosphothreonine modification is found at threonine 36. Positions 83-132 (VLIGRADDSTLVLTDDYASTRHARLSPRGSEWYVEDLGSTNGTYLDRAKV) constitute an FHA domain.

In terms of processing, phosphorylated by PknB. Dephosphorylated by PstP.

The protein localises to the cell membrane. The sequence is that of FHA domain-containing protein FhaB (fhaB) from Mycolicibacterium smegmatis (strain ATCC 700084 / mc(2)155) (Mycobacterium smegmatis).